The primary structure comprises 262 residues: Pyridoxine 5'-phosphate synthase (262 aa).

Asn6 contributes to the 3-amino-2-oxopropyl phosphate binding site. Residue Asp8–His9 coordinates 1-deoxy-D-xylulose 5-phosphate. Arg17 provides a ligand contact to 3-amino-2-oxopropyl phosphate. Catalysis depends on His43, which acts as the Proton acceptor. 1-deoxy-D-xylulose 5-phosphate contacts are provided by Arg45 and His50. Glu70 acts as the Proton acceptor in catalysis. Thr102 lines the 1-deoxy-D-xylulose 5-phosphate pocket. Catalysis depends on His215, which acts as the Proton donor. Residues Gly216 and Gly237–His238 each bind 3-amino-2-oxopropyl phosphate.

The protein belongs to the PNP synthase family. In terms of assembly, homooctamer; tetramer of dimers.

The protein resides in the cytoplasm. It carries out the reaction 3-amino-2-oxopropyl phosphate + 1-deoxy-D-xylulose 5-phosphate = pyridoxine 5'-phosphate + phosphate + 2 H2O + H(+). It participates in cofactor biosynthesis; pyridoxine 5'-phosphate biosynthesis; pyridoxine 5'-phosphate from D-erythrose 4-phosphate: step 5/5. Functionally, catalyzes the complicated ring closure reaction between the two acyclic compounds 1-deoxy-D-xylulose-5-phosphate (DXP) and 3-amino-2-oxopropyl phosphate (1-amino-acetone-3-phosphate or AAP) to form pyridoxine 5'-phosphate (PNP) and inorganic phosphate. The chain is Pyridoxine 5'-phosphate synthase from Helicobacter pylori (strain Shi470).